The following is a 345-amino-acid chain: Phosphate acyltransferase (345 aa).

It belongs to the PlsX family. In terms of assembly, homodimer. Probably interacts with PlsY.

Its subcellular location is the cytoplasm. It catalyses the reaction a fatty acyl-[ACP] + phosphate = an acyl phosphate + holo-[ACP]. Its pathway is lipid metabolism; phospholipid metabolism. Its function is as follows. Catalyzes the reversible formation of acyl-phosphate (acyl-PO(4)) from acyl-[acyl-carrier-protein] (acyl-ACP). This enzyme utilizes acyl-ACP as fatty acyl donor, but not acyl-CoA. The polypeptide is Phosphate acyltransferase (Dichelobacter nodosus (strain VCS1703A)).